The chain runs to 376 residues: Protein-glutamate methylesterase/protein-glutamine glutaminase (376 aa).

The 118-residue stretch at 5 to 122 folds into the Response regulatory domain; that stretch reads KVLIVDDSAL…QHTFEDYTDE (118 aa). D56 is subject to 4-aspartylphosphate. The CheB-type methylesterase domain maps to 185–376; that stretch reads SKPSHKVIAL…PEKILALIKK (192 aa). Active-site residues include S197, H223, and D319.

It belongs to the CheB family. Phosphorylated by CheA. Phosphorylation of the N-terminal regulatory domain activates the methylesterase activity.

It is found in the cytoplasm. The catalysed reaction is [protein]-L-glutamate 5-O-methyl ester + H2O = L-glutamyl-[protein] + methanol + H(+). It carries out the reaction L-glutaminyl-[protein] + H2O = L-glutamyl-[protein] + NH4(+). Its function is as follows. Involved in chemotaxis. Part of a chemotaxis signal transduction system that modulates chemotaxis in response to various stimuli. Catalyzes the demethylation of specific methylglutamate residues introduced into the chemoreceptors (methyl-accepting chemotaxis proteins or MCP) by CheR. Also mediates the irreversible deamidation of specific glutamine residues to glutamic acid. The sequence is that of Protein-glutamate methylesterase/protein-glutamine glutaminase from Hydrogenovibrio crunogenus (strain DSM 25203 / XCL-2) (Thiomicrospira crunogena).